Reading from the N-terminus, the 512-residue chain is Retinaldehyde dehydrogenase 3 (512 aa).

The tract at residues 1–22 is disordered; sequence MATTNGAVENGQPDGKPPALPR. A2 carries the N-acetylalanine modification. Residues K204, E207, and 257–262 contribute to the NAD(+) site; that span reads GSTEVG. E280 functions as the Proton acceptor in the catalytic mechanism. C314 (nucleophile) is an active-site residue. Residues Q361 and E411 each coordinate NAD(+).

This sequence belongs to the aldehyde dehydrogenase family. As to quaternary structure, homotetramer. In terms of tissue distribution, detected in embryonic head (at protein level). Ventral retina.

It localises to the cytoplasm. The enzyme catalyses retinal + NAD(+) + H2O = retinoate + NADH + 2 H(+). It carries out the reaction all-trans-retinal + NAD(+) + H2O = all-trans-retinoate + NADH + 2 H(+). It catalyses the reaction all-trans-13,14-dihydroretinal + NAD(+) + H2O = all-trans-13,14-dihydroretinoate + NADH + 2 H(+). It functions in the pathway cofactor metabolism; retinol metabolism. Functionally, catalyzes the NAD-dependent oxidation of aldehyde substrates, such as all-trans-retinal and all-trans-13,14-dihydroretinal, to their corresponding carboxylic acids, all-trans-retinoate and all-trans-13,14-dihydroretinoate, respectively. High specificity for all-trans-retinal as substrate, can also accept acetaldehyde as substrate in vitro but with lower affinity. Required for the biosynthesis of normal levels of retinoate in the embryonic ocular and nasal regions; a critical lipid in the embryonic development of the eye and the nasal region. The protein is Retinaldehyde dehydrogenase 3 (Aldh1a3) of Mus musculus (Mouse).